Reading from the N-terminus, the 231-residue chain is Ribosomal RNA large subunit methyltransferase E (231 aa).

S-adenosyl-L-methionine is bound by residues Gly76, Trp78, Asp99, Asp115, and Asp139. The active-site Proton acceptor is the Lys179.

Belongs to the class I-like SAM-binding methyltransferase superfamily. RNA methyltransferase RlmE family.

The protein localises to the cytoplasm. The enzyme catalyses uridine(2552) in 23S rRNA + S-adenosyl-L-methionine = 2'-O-methyluridine(2552) in 23S rRNA + S-adenosyl-L-homocysteine + H(+). Its function is as follows. Specifically methylates the uridine in position 2552 of 23S rRNA at the 2'-O position of the ribose in the fully assembled 50S ribosomal subunit. The polypeptide is Ribosomal RNA large subunit methyltransferase E (Bradyrhizobium sp. (strain BTAi1 / ATCC BAA-1182)).